We begin with the raw amino-acid sequence, 347 residues long: MKPPIFIIIMSTVISGTVIVMTSSHWMLTWIGFEMNMLAIIPILMKKFNPRAMEASTKYFLTQATASMLLMMGIIINLLHSGQWTVSNNLNPMASILMTTALAMKLGLAPFHFWVPEVTQGISLSSGMILLTWQKIAPLSILYQISPTINPHLLLPMAILSVLIGGWGGLNQTQLRKIMAYSSIAHMGWMAAILLYNPTMMFLNLIIYITMTLTTFMLFMLNSATTTLSLSQTWNKAPLITSLILTLMLSLGGLPPLSGFTPKWMIIQELTKNEMIILPTFLAITALLNLYFYMRLTYATALTMFPSTNNMKMKWQFESTKKTIFLPPLIIISTMMLPLTPMISILD.

The next 11 membrane-spanning stretches (helical) occupy residues 3–23, 25–45, 59–79, 96–116, 122–142, 149–169, 178–198, 201–221, 237–257, 274–294, and 323–343; these read PPIF…VMTS, HWML…PILM, YFLT…INLL, ILMT…FWVP, ISLS…LSIL, INPH…GWGG, IMAY…LYNP, MFLN…LFML, APLI…LPPL, EMII…YFYM, and TIFL…TPMI.

Belongs to the complex I subunit 2 family. As to quaternary structure, core subunit of respiratory chain NADH dehydrogenase (Complex I) which is composed of 45 different subunits. Interacts with TMEM242.

It is found in the mitochondrion inner membrane. The enzyme catalyses a ubiquinone + NADH + 5 H(+)(in) = a ubiquinol + NAD(+) + 4 H(+)(out). Its function is as follows. Core subunit of the mitochondrial membrane respiratory chain NADH dehydrogenase (Complex I) which catalyzes electron transfer from NADH through the respiratory chain, using ubiquinone as an electron acceptor. Essential for the catalytic activity and assembly of complex I. The polypeptide is NADH-ubiquinone oxidoreductase chain 2 (Viverra tangalunga (Malayan civet)).